A 422-amino-acid chain; its full sequence is MGMTIIEKILARKAGVAEVHAGEIVTVEVDMTVLIDLQFATMWMQPLMINDASKVAIVMDHAVPAPTIKDAAGGPNARKFANDYGIERFYDVGRHGICHQVIAENGLARPGEILACTDSHTCAGGAFNTAARGLGPAEVYSILCTGQTWFQASPTIRYELIGSMPAGVSGKDVFLYIADAFGDATNSNLEYGGPGLASIPLNDRRTIATQGAEISADFSTFAYDDVLAEHFDDLGITSYEPAHADPDAAYAAVREIDLSALAPYVARPGTVSRNGVSVDEVEPRKIDQAFIGSCANGQLDDLRIAAEILRGRRVAPGVRLIVTPASQQVYRDAMRLGYLQDIADAGAVITNSTCGACFGYHMGVVGPGEVCLTSSTRNFTGRMGSTEAEIYMASPATVAASAVAGHITDARKVVAQWLQVSL.

3 residues coordinate [4Fe-4S] cluster: C294, C354, and C357.

This sequence belongs to the aconitase/IPM isomerase family. LeuC type 2 subfamily. Heterodimer of LeuC and LeuD. It depends on [4Fe-4S] cluster as a cofactor.

The enzyme catalyses (2R,3S)-3-isopropylmalate = (2S)-2-isopropylmalate. The protein operates within amino-acid biosynthesis; L-leucine biosynthesis; L-leucine from 3-methyl-2-oxobutanoate: step 2/4. Its function is as follows. Catalyzes the isomerization between 2-isopropylmalate and 3-isopropylmalate, via the formation of 2-isopropylmaleate. The chain is 3-isopropylmalate dehydratase large subunit from Mycolicibacterium smegmatis (strain ATCC 700084 / mc(2)155) (Mycobacterium smegmatis).